Consider the following 194-residue polypeptide: GTP cyclohydrolase 1 (194 aa).

Residues Cys-83, His-86, and Cys-155 each coordinate Zn(2+).

This sequence belongs to the GTP cyclohydrolase I family. As to quaternary structure, homomer.

The catalysed reaction is GTP + H2O = 7,8-dihydroneopterin 3'-triphosphate + formate + H(+). The protein operates within cofactor biosynthesis; 7,8-dihydroneopterin triphosphate biosynthesis; 7,8-dihydroneopterin triphosphate from GTP: step 1/1. This is GTP cyclohydrolase 1 from Streptococcus pyogenes serotype M49 (strain NZ131).